The following is a 369-amino-acid chain: Extracellular signal-regulated kinase 2 (369 aa).

Residues 14 to 304 (YEVLQKIGKG…AEEALAHPFV (291 aa)) form the Protein kinase domain. Residues 20–28 (IGKGAYGIV) and Lys43 each bind ATP. Asp137 serves as the catalytic Proton acceptor. Phosphothreonine is present on Thr176. Positions 176 to 178 (TEY) match the TXY motif. Phosphotyrosine is present on Tyr178. Residues 346–369 (KKKEERKKQTNPTKPDTTAPTLST) are disordered. Polar residues predominate over residues 355 to 369 (TNPTKPDTTAPTLST).

Belongs to the protein kinase superfamily. CMGC Ser/Thr protein kinase family. MAP kinase subfamily. The cofactor is Mg(2+). Post-translationally, dually phosphorylated on Thr-176 and Tyr-178, which activates the enzyme.

It catalyses the reaction L-seryl-[protein] + ATP = O-phospho-L-seryl-[protein] + ADP + H(+). The enzyme catalyses L-threonyl-[protein] + ATP = O-phospho-L-threonyl-[protein] + ADP + H(+). With respect to regulation, activated by tyrosine and threonine phosphorylation. Functionally, implicated in the relay of the cAMP chemotactic signal and cell differentiation. Important for receptor-mediated activation of adenylyl cyclase. The chain is Extracellular signal-regulated kinase 2 (erkB) from Dictyostelium discoideum (Social amoeba).